The primary structure comprises 104 residues: Small ribosomal subunit protein uS10 (104 aa).

It belongs to the universal ribosomal protein uS10 family. As to quaternary structure, part of the 30S ribosomal subunit.

Its function is as follows. Involved in the binding of tRNA to the ribosomes. The chain is Small ribosomal subunit protein uS10 from Helicobacter pylori (strain J99 / ATCC 700824) (Campylobacter pylori J99).